The sequence spans 727 residues: Protein TITANIA (727 aa).

The interval 1-136 (MFGDSDGSKD…LASLLQPVPA (136 aa)) is disordered. A compositionally biased stretch (pro residues) spans 14-25 (GAPPSTTDPPFP). Residues 67-88 (DDGKHCVERDFLHLSAPKRGDP) are compositionally biased toward basic and acidic residues. The span at 104-117 (DSLQLSLSLNSDGP) shows a compositional bias: low complexity. The PHD-type zinc-finger motif lies at 406–470 (ACTCSVCHKF…QFQCLACNHS (65 aa)). Residues 629–697 (VKCKEAEAKL…LEELKMLENS (69 aa)) adopt a coiled-coil conformation.

Widely expressed.

The protein localises to the nucleus. In terms of biological role, probable transcription factor that functions as a regulator of metal transporter genes responsible for essential metals delivery to shoots and normal plant growth. Required for the maintenance of metal transporter gene expression, such as IRT1, IRT2, ZIP1, ZIP9, NRAMP1 and NRAMP5. This is Protein TITANIA from Oryza sativa subsp. japonica (Rice).